Here is a 246-residue protein sequence, read N- to C-terminus: Purine nucleoside phosphorylase ORF3 (246 aa).

Histidine 71, cysteine 110, and histidine 127 together coordinate Zn(2+).

This sequence belongs to the purine nucleoside phosphorylase YfiH/LACC1 family. Homodimer. Cu(2+) is required as a cofactor. It depends on Zn(2+) as a cofactor.

The enzyme catalyses adenosine + phosphate = alpha-D-ribose 1-phosphate + adenine. The catalysed reaction is S-methyl-5'-thioadenosine + phosphate = 5-(methylsulfanyl)-alpha-D-ribose 1-phosphate + adenine. It catalyses the reaction inosine + phosphate = alpha-D-ribose 1-phosphate + hypoxanthine. It carries out the reaction adenosine + H2O + H(+) = inosine + NH4(+). Purine nucleoside enzyme that catalyzes the phosphorolysis of adenosine and inosine nucleosides, yielding D-ribose 1-phosphate and the respective free bases, adenine and hypoxanthine. Also catalyzes the phosphorolysis of S-methyl-5'-thioadenosine into adenine and S-methyl-5-thio-alpha-D-ribose 1-phosphate. Also has adenosine deaminase activity. This is Purine nucleoside phosphorylase ORF3 from Streptomyces griseus.